A 319-amino-acid chain; its full sequence is Glucokinase (319 aa).

8-13 (GDIGGT) serves as a coordination point for ATP.

Belongs to the bacterial glucokinase family.

Its subcellular location is the cytoplasm. The catalysed reaction is D-glucose + ATP = D-glucose 6-phosphate + ADP + H(+). The protein is Glucokinase of Chromohalobacter salexigens (strain ATCC BAA-138 / DSM 3043 / CIP 106854 / NCIMB 13768 / 1H11).